The chain runs to 212 residues: Kynurenine formamidase (212 aa).

Position 18 (tryptophan 18) interacts with substrate. The Zn(2+) site is built by histidine 48, histidine 52, and aspartate 54. The Proton donor/acceptor role is filled by histidine 58. Zn(2+) is bound by residues histidine 160 and glutamate 172.

The protein belongs to the Cyclase 1 superfamily. KynB family. In terms of assembly, homodimer. Requires Zn(2+) as cofactor.

The enzyme catalyses N-formyl-L-kynurenine + H2O = L-kynurenine + formate + H(+). The protein operates within amino-acid degradation; L-tryptophan degradation via kynurenine pathway; L-kynurenine from L-tryptophan: step 2/2. Catalyzes the hydrolysis of N-formyl-L-kynurenine to L-kynurenine, the second step in the kynurenine pathway of tryptophan degradation. This is Kynurenine formamidase from Paraburkholderia xenovorans (strain LB400).